The sequence spans 129 residues: Small ribosomal subunit protein uS11 (129 aa).

Belongs to the universal ribosomal protein uS11 family. As to quaternary structure, part of the 30S ribosomal subunit. Interacts with proteins S7 and S18. Binds to IF-3.

Functionally, located on the platform of the 30S subunit, it bridges several disparate RNA helices of the 16S rRNA. Forms part of the Shine-Dalgarno cleft in the 70S ribosome. This Desulfitobacterium hafniense (strain DSM 10664 / DCB-2) protein is Small ribosomal subunit protein uS11.